The primary structure comprises 288 residues: Bifunctional protein FolD (288 aa).

NADP(+) contacts are provided by residues 166–168 and isoleucine 232; that span reads GAS.

The protein belongs to the tetrahydrofolate dehydrogenase/cyclohydrolase family. Homodimer.

It catalyses the reaction (6R)-5,10-methylene-5,6,7,8-tetrahydrofolate + NADP(+) = (6R)-5,10-methenyltetrahydrofolate + NADPH. The enzyme catalyses (6R)-5,10-methenyltetrahydrofolate + H2O = (6R)-10-formyltetrahydrofolate + H(+). It functions in the pathway one-carbon metabolism; tetrahydrofolate interconversion. Functionally, catalyzes the oxidation of 5,10-methylenetetrahydrofolate to 5,10-methenyltetrahydrofolate and then the hydrolysis of 5,10-methenyltetrahydrofolate to 10-formyltetrahydrofolate. This is Bifunctional protein FolD from Erwinia tasmaniensis (strain DSM 17950 / CFBP 7177 / CIP 109463 / NCPPB 4357 / Et1/99).